A 449-amino-acid polypeptide reads, in one-letter code: uncharacterized protein (449 aa).

Positions 3–61 (VWQQGATIELRIDSLSHTGEGVGRWQDRVVFVADTVPGDRLRVRLTHVKRQYAHGKVLE) constitute a TRAM domain. Residues cysteine 74, cysteine 80, cysteine 83, and cysteine 161 each coordinate [4Fe-4S] cluster. The S-adenosyl-L-methionine site is built by glutamine 283, tyrosine 312, glutamate 333, and aspartate 378. Cysteine 405 acts as the Nucleophile in catalysis.

It belongs to the class I-like SAM-binding methyltransferase superfamily. RNA M5U methyltransferase family.

This is an uncharacterized protein from Thermosynechococcus vestitus (strain NIES-2133 / IAM M-273 / BP-1).